The sequence spans 227 residues: Cytidylate kinase (227 aa).

7 to 15 contributes to the ATP binding site; sequence GPSGAGKGT.

This sequence belongs to the cytidylate kinase family. Type 1 subfamily.

It localises to the cytoplasm. It catalyses the reaction CMP + ATP = CDP + ADP. The enzyme catalyses dCMP + ATP = dCDP + ADP. The sequence is that of Cytidylate kinase from Actinobacillus succinogenes (strain ATCC 55618 / DSM 22257 / CCUG 43843 / 130Z).